Reading from the N-terminus, the 585-residue chain is Proline-rich protein 14 (585 aa).

At methionine 1 the chain carries N-acetylmethionine. The sufficient for heterochromatin association in interphase and chromatin association in anaphase stretch occupies residues 1-135 (MDLPGDSSPP…TLRRRSRTTP (135 aa)). 3 disordered regions span residues 23–46 (ALWGARSPKRPRLQLPGAPSPLEK), 73–150 (TSIP…RAPQ), and 189–241 (IVRQ…RPRL). The required for the interaction with GRB2 and sufficient to promote the phosphorylation of AKT and cell proliferation stretch occupies residues 85 to 378 (PVHRQPPASP…MARAPPPPRP (294 aa)). Positions 119 to 132 (RIHRTSSTLRRRSR) are enriched in basic residues. The segment at 136–365 (GPEEGPSQKV…RPRPRRHTVG (230 aa)) is required for nuclear lamina association. Over residues 193-205 (PTPPPGDLEPPFQ) the composition is skewed to pro residues. Serine 277 is modified (phosphoserine). 2 disordered regions span residues 290–445 (EAEQ…KVSR) and 525–557 (DSSLPRSRRPSRGVRAAGGRTVPPNVAPSPDVG). Over residues 337–356 (LGPPGPGTCTWPPAPPQPSR) the composition is skewed to pro residues. Over residues 393–409 (SPSLTTSCSSTASTSFS) the composition is skewed to low complexity. Positions 518–535 (RRAVEFRDSSLPRSRRPS) are required for nuclear localization.

As to quaternary structure, interacts (via proline-rich region) with GRB2 (via SH3 domain 2). Interacts (via N-terminus) with CBX5.

It localises to the chromosome. The protein resides in the nucleus. The protein localises to the nucleus lamina. It is found in the nucleoplasm. Its function is as follows. Functions in tethering peripheral heterochromatin to the nuclear lamina during interphase, possibly through the interaction with heterochromatin protein CBX5/HP1 alpha. Might play a role in reattaching heterochromatin to the nuclear lamina at mitotic exit. Promotes myoblast differentiation during skeletal myogenesis, possibly by stimulating transcription factor MyoD activity via binding to CBX5/HP1 alpha. Involved in the positive regulation of the PI3K-Akt-mTOR signaling pathway and in promoting cell proliferation, possibly via binding to GRB2. The polypeptide is Proline-rich protein 14 (PRR14) (Homo sapiens (Human)).